Reading from the N-terminus, the 217-residue chain is NADPH-dependent 3-demethoxyubiquinone 3-hydroxylase, mitochondrial (217 aa).

A run of 2 repeats spans residues 48–129 (AVDQ…TALL) and 130–217 (GKEG…SERF). Residues 48–217 (AVDQIIRVDH…SAAIYLSERF (170 aa)) are 2 X approximate tandem repeats. Residues glutamate 60, glutamate 90, histidine 93, glutamate 142, glutamate 178, and histidine 181 each contribute to the Fe cation site. Residues tyrosine 212 and arginine 216 each coordinate NADH.

Belongs to the COQ7 family. In terms of assembly, component of a multi-subunit COQ enzyme complex. Interacts with COQ8B and COQ6. Interacts with COQ9. Fe cation is required as a cofactor.

It localises to the mitochondrion inner membrane. The catalysed reaction is a 5-methoxy-2-methyl-3-(all-trans-polyprenyl)benzoquinone + NADH + O2 = a 3-demethylubiquinone + NAD(+) + H2O. The protein operates within cofactor biosynthesis; ubiquinone biosynthesis. Catalyzes the hydroxylation of the 5-methoxy-2-methyl-3-(all-trans-polyprenyl)benzoquinone at the C6 position and participates in the biosynthesis of ubiquinone. Catalyzes the reaction through a substrate-mediated reduction pathway, whereby NADH shuttles electrons to 5-methoxy-2-methyl-3-(all-trans-decaprenyl)benzoquinone, which then transfers the electrons to the two Fe(3+) centers. The binding of 5-methoxy-2-methyl-3-(all-trans-polyprenyl)benzoquinone (DMQn) mediates reduction of the diiron center by nicotinamide adenine dinucleotide (NADH) and initiates oxygen activation for subsequent DMQ hydroxylation. The physiological substrates are 5-methoxy-2-methyl-3-(all-trans-nonaprenyl)benzoquinone (DMQ(9)) and 5-methoxy-2-methyl-3-(all-trans-decaprenyl)benzoquinone (DMQ(10)), however in vitro the enzyme does not have any specificity concerning the length of the polyprenyl tail, and accepts tails of various lengths with similar efficiency. Also has a structural role in the COQ enzyme complex, stabilizing other COQ polypeptides. Involved in lifespan determination in a ubiquinone-independent manner. Plays a role in modulating mitochondrial stress responses, acting in the nucleus, perhaps via regulating gene expression, independent of its characterized mitochondrial function in ubiquinone biosynthesis. The sequence is that of NADPH-dependent 3-demethoxyubiquinone 3-hydroxylase, mitochondrial from Rattus norvegicus (Rat).